A 403-amino-acid polypeptide reads, in one-letter code: NADH-quinone oxidoreductase subunit D (403 aa).

This sequence belongs to the complex I 49 kDa subunit family. NDH-1 is composed of 14 different subunits. Subunits NuoB, C, D, E, F, and G constitute the peripheral sector of the complex.

The protein resides in the cell inner membrane. It carries out the reaction a quinone + NADH + 5 H(+)(in) = a quinol + NAD(+) + 4 H(+)(out). Its function is as follows. NDH-1 shuttles electrons from NADH, via FMN and iron-sulfur (Fe-S) centers, to quinones in the respiratory chain. The immediate electron acceptor for the enzyme in this species is believed to be ubiquinone. Couples the redox reaction to proton translocation (for every two electrons transferred, four hydrogen ions are translocated across the cytoplasmic membrane), and thus conserves the redox energy in a proton gradient. The polypeptide is NADH-quinone oxidoreductase subunit D (Ruegeria sp. (strain TM1040) (Silicibacter sp.)).